The following is a 462-amino-acid chain: L-seryl-tRNA(Sec) selenium transferase (462 aa).

Residue lysine 295 is modified to N6-(pyridoxal phosphate)lysine.

It belongs to the SelA family. Homodecamer; pentamer of dimers. Binds only one seryl-tRNA(Sec) per dimer. Pyridoxal 5'-phosphate is required as a cofactor.

Its subcellular location is the cytoplasm. The catalysed reaction is L-seryl-tRNA(Sec) + selenophosphate + H(+) = L-selenocysteinyl-tRNA(Sec) + phosphate. It participates in aminoacyl-tRNA biosynthesis; selenocysteinyl-tRNA(Sec) biosynthesis; selenocysteinyl-tRNA(Sec) from L-seryl-tRNA(Sec) (bacterial route): step 1/1. Its function is as follows. Converts seryl-tRNA(Sec) to selenocysteinyl-tRNA(Sec) required for selenoprotein biosynthesis. The polypeptide is L-seryl-tRNA(Sec) selenium transferase (Klebsiella pneumoniae (strain 342)).